Consider the following 406-residue polypeptide: Bifunctional protein GlmU (406 aa).

Residues methionine 1–arginine 221 are pyrophosphorylase. Residues leucine 5 to glycine 8, lysine 19, glutamine 68, glycine 73 to threonine 74, tyrosine 98 to aspartate 100, glycine 134, glutamate 148, asparagine 162, and asparagine 219 each bind UDP-N-acetyl-alpha-D-glucosamine. Residue aspartate 100 coordinates Mg(2+). Mg(2+) is bound at residue asparagine 219. The interval asparagine 222–serine 242 is linker. The tract at residues glycine 243–lysine 406 is N-acetyltransferase. Lysine 308 serves as a coordination point for UDP-N-acetyl-alpha-D-glucosamine. Histidine 320 (proton acceptor) is an active-site residue. Residues tyrosine 323 and asparagine 334 each coordinate UDP-N-acetyl-alpha-D-glucosamine. Residues alanine 337, asparagine 343–tyrosine 344, alanine 380, and arginine 397 each bind acetyl-CoA.

This sequence in the N-terminal section; belongs to the N-acetylglucosamine-1-phosphate uridyltransferase family. It in the C-terminal section; belongs to the transferase hexapeptide repeat family. In terms of assembly, homotrimer. It depends on Mg(2+) as a cofactor.

The protein resides in the cytoplasm. The enzyme catalyses alpha-D-glucosamine 1-phosphate + acetyl-CoA = N-acetyl-alpha-D-glucosamine 1-phosphate + CoA + H(+). It carries out the reaction N-acetyl-alpha-D-glucosamine 1-phosphate + UTP + H(+) = UDP-N-acetyl-alpha-D-glucosamine + diphosphate. The protein operates within nucleotide-sugar biosynthesis; UDP-N-acetyl-alpha-D-glucosamine biosynthesis; N-acetyl-alpha-D-glucosamine 1-phosphate from alpha-D-glucosamine 6-phosphate (route II): step 2/2. Its pathway is nucleotide-sugar biosynthesis; UDP-N-acetyl-alpha-D-glucosamine biosynthesis; UDP-N-acetyl-alpha-D-glucosamine from N-acetyl-alpha-D-glucosamine 1-phosphate: step 1/1. It participates in bacterial outer membrane biogenesis; LPS lipid A biosynthesis. Its function is as follows. Catalyzes the last two sequential reactions in the de novo biosynthetic pathway for UDP-N-acetylglucosamine (UDP-GlcNAc). The C-terminal domain catalyzes the transfer of acetyl group from acetyl coenzyme A to glucosamine-1-phosphate (GlcN-1-P) to produce N-acetylglucosamine-1-phosphate (GlcNAc-1-P), which is converted into UDP-GlcNAc by the transfer of uridine 5-monophosphate (from uridine 5-triphosphate), a reaction catalyzed by the N-terminal domain. The chain is Bifunctional protein GlmU from Wolbachia sp. subsp. Brugia malayi (strain TRS).